The chain runs to 1087 residues: DYRK-family kinase pom1 (1087 aa).

Disordered stretches follow at residues 57 to 81 (CPNR…NTNI), 120 to 182 (LLRS…SKSF), 238 to 308 (MAPK…LSTI), and 336 to 578 (NHSH…PSLS). Over residues 62–81 (SSSSTAADTSPSTNASNTNI) the composition is skewed to low complexity. Composition is skewed to polar residues over residues 132 to 165 (KNSP…PSSL) and 246 to 256 (WRHTNFHSTSH). Low complexity predominate over residues 292–307 (SGSLTKSSSESKNLST). Positions 336 to 361 (NHSHVGSQTKSHSFATPSVFDNNKPV) are enriched in polar residues. Positions 362–373 (SSDNHNNTTTSS) are enriched in low complexity. Residues 397–407 (VDGHRNHEAKH) are compositionally biased toward basic and acidic residues. Residues 429–442 (RGGFFSRLSFSRSS) are compositionally biased toward low complexity. Residues 478–488 (NGKKTPTRTKS) are compositionally biased toward basic residues. The residue at position 513 (S513) is a Phosphoserine. Residues 527–536 (VSREPEKPEE) show a composition bias toward basic and acidic residues. Over residues 555 to 578 (QQRSVSYTPKRSSDTSESLQPSLS) the composition is skewed to polar residues. Positions 699-995 (YEVVDFLGKG…PQQAAQHDFL (297 aa)) constitute a Protein kinase domain. Residues 705–713 (LGKGSFGQV) and K728 each bind ATP. D825 serves as the catalytic Proton acceptor. 2 disordered regions span residues 992–1011 (HDFL…PARQ) and 1017–1056 (PNIE…LVRS). Residues 1045–1055 (EPSNQASNLVR) show a composition bias toward polar residues.

This sequence belongs to the protein kinase superfamily. CMGC Ser/Thr protein kinase family. MNB/DYRK subfamily. In terms of assembly, interacts with rga4. Interacts with tea4; this interaction triggers pom1 plasma membrane association. In terms of processing, autophosphorylates at the cell cortex to lower lipid affinity and promote membrane release. Dephosphorylation by dis2, regulated by tea4, triggers membrane association.

Its subcellular location is the cell tip. The protein localises to the cell membrane. The enzyme catalyses L-seryl-[protein] + ATP = O-phospho-L-seryl-[protein] + ADP + H(+). The catalysed reaction is L-threonyl-[protein] + ATP = O-phospho-L-threonyl-[protein] + ADP + H(+). It catalyses the reaction L-tyrosyl-[protein] + ATP = O-phospho-L-tyrosyl-[protein] + ADP + H(+). Its function is as follows. Polarity factor involved in localization of polarized growth and cytokinesis. Forms an intracellular gradient that serves to measure cell length and control mitotic entry. Controls the timing of mitotic commitment by regulating the inhibitory impact of cdr1/cdr2 on wee1 activity. Directly phosphorylates the tail of cdr2 which inhibits cdr2 activation by ssp1. Cdr2 phosphorylation by pom1 also modulates cdr2 association with membranes and inhibits cdr2 interaction with mid1, reducing its clustering ability, possibly via the down-regulation of cdr2 kinase activity. Acts as a negative regulator of mid1 distribution, excluding mid1 from non-growing ends, which prevents division-septum assembly at the cell ends. The pom1 polar gradient also mediates mitotic entry by regulating cdk1. Plays an essential role in proper localization and phosphorylation of a GAP for cdc42, rga4, which ensures bipolar localization of GTP-bound, active cdc42 involved in F-actin formation. Phosphorylates multiple other substrates that function in polarized cell growth, including tea4, mod5, pal1, the Rho GAP rga7, and the Arf GEF syt22. The sequence is that of DYRK-family kinase pom1 from Schizosaccharomyces pombe (strain 972 / ATCC 24843) (Fission yeast).